The chain runs to 504 residues: Xylose import ATP-binding protein XylG (504 aa).

2 ABC transporter domains span residues 5–242 (LEMK…VGRE) and 259–500 (LRVE…VMEA). Residue 37–44 (GENGSGKS) participates in ATP binding.

The protein belongs to the ABC transporter superfamily. Xylose importer (TC 3.A.1.2.4) family. In terms of assembly, the complex is composed of two ATP-binding proteins (XylG), two transmembrane proteins (XylH) and a solute-binding protein (XylF).

It localises to the cell inner membrane. The catalysed reaction is D-xylose(out) + ATP + H2O = D-xylose(in) + ADP + phosphate + H(+). Its function is as follows. Part of the ABC transporter complex XylFGH involved in xylose import. Responsible for energy coupling to the transport system. This Histophilus somni (strain 129Pt) (Haemophilus somnus) protein is Xylose import ATP-binding protein XylG.